A 912-amino-acid chain; its full sequence is Receptor protein kinase WSS1 (912 aa).

A signal peptide spans 1 to 27 (MGRDARRLPLLPFLLLLLAAAAGVAES). Residues 28 to 477 (ATDAEAIHDL…AGGGKSKPNT (450 aa)) are Extracellular-facing. LRR repeat units follow at residues 64 to 88 (AGKVTELNLADRGLSGTLPDSLSSL), 89 to 111 (TSLTALQLQGNALTGAVPSLARM), and 112 to 134 (GSLARLALDGNAFTSLPPDFLHG). N-linked (GlcNAc...) asparagine glycosylation is found at asparagine 159, asparagine 170, asparagine 196, asparagine 256, asparagine 286, asparagine 371, asparagine 376, asparagine 387, and asparagine 400. LRR repeat units lie at residues 184–208 (LVSLRNLRLSYNNLTGGLPPELSSL), 235–261 (MKSLKLLWIQSNKFTGPIPDLNGTQLE), 281–303 (LMSLKNVSLSNNNFQGPKPAFAA), 364–388 (SSDVSMINLSRKNLSGRISPALANL), 389–411 (TRLARLDLSNNNLTGVIPDVLTT), and 413–438 (PSLTVLNVANNRLTGEVPKFKPSVNV). Residues 448–472 (SSGSSGGGGGSDGDSSSSDSAGGGK) form a disordered region. The helical transmembrane segment at 478 to 498 (GMIIGIIVAVIILFACIALLV) threads the bilayer. Over 499-912 (HHRKKKNVEK…SFNVPRKYNG (414 aa)) the chain is Cytoplasmic. One can recognise a Protein kinase domain in the interval 580 to 859 (FSEDCILGRG…HCVNRLSSLV (280 aa)). Residues 586–594 (LGRGGFGVV) and lysine 607 contribute to the ATP site. Aspartate 708 acts as the Proton acceptor in catalysis.

This sequence belongs to the protein kinase superfamily. Ser/Thr protein kinase family. The cofactor is Mn(2+). As to expression, expressed in young and mature leaves.

It localises to the cell membrane. The enzyme catalyses L-seryl-[protein] + ATP = O-phospho-L-seryl-[protein] + ADP + H(+). It catalyses the reaction L-threonyl-[protein] + ATP = O-phospho-L-threonyl-[protein] + ADP + H(+). Its function is as follows. Transmembrane kinase receptor involved in the regulation of reactive oxygen species (ROS) homeostasis, chloroplast development and leaf senescence. The protein is Receptor protein kinase WSS1 of Oryza sativa subsp. japonica (Rice).